Consider the following 170-residue polypeptide: Mitochondrial fission 1 protein A (170 aa).

A TPR repeat occupies arginine 90–tryptophan 123. Residues valine 142–isoleucine 162 traverse the membrane as a helical segment.

This sequence belongs to the FIS1 family. As to quaternary structure, interacts with ARC5.

The protein localises to the mitochondrion outer membrane. It localises to the peroxisome membrane. Functionally, component of the peroxisomal and mitochondrial division machineries. Plays a role in promoting the fission of mitochondria and peroxisomes. This is Mitochondrial fission 1 protein A (FIS1A) from Arabidopsis thaliana (Mouse-ear cress).